Here is a 474-residue protein sequence, read N- to C-terminus: Tumor necrosis factor receptor superfamily member 1B (474 aa).

A signal peptide spans 1–22; it reads MAPAALWVALVFELQLWATGHT. Topologically, residues 23-258 are extracellular; that stretch reads VPAQVVLTPY…PIIEQSTKGG (236 aa). Thr30 is a glycosylation site (O-linked (GalNAc...) threonine). TNFR-Cys repeat units follow at residues 39-77, 78-119, 120-164, and 165-203; these read ECQI…TVCA, DCEA…NRVC, ACEA…VLCK, and ACAP…AVCA. Intrachain disulfides connect Cys40–Cys54, Cys55–Cys68, Cys58–Cys76, Cys79–Cys94, Cys97–Cys111, Cys101–Cys119, Cys121–Cys127, Cys136–Cys145, Cys139–Cys163, and Cys166–Cys181. A glycan (N-linked (GlcNAc...) asparagine) is linked at Asn69. A glycan (N-linked (GlcNAc...) asparagine) is linked at Asn195. Residues Thr208 and Thr224 are each glycosylated (O-linked (GalNAc...) threonine). Residues 220 to 243 are disordered; it reads QPEPTRSQPLDQEPGPSQTPSILT. The chain crosses the membrane as a helical span at residues 259 to 288; the sequence is ISLPIGLIVGVTSLGLLMLGLVNCIILVQR. Topologically, residues 289-474 are cytoplasmic; the sequence is KKKPSCLQRD…WFDQIAVKVA (186 aa). Disordered regions lie at residues 295–314, 321–378, and 397–463; these read LQRD…DAVG, LTTA…GSHG, and SQCS…PSQA. The segment covering 297-310 has biased composition (basic and acidic residues); that stretch reads RDAKVPHVPDEKSQ. 2 stretches are compositionally biased toward low complexity: residues 324-338 and 363-378; these read APSS…SASA and ARAS…GSHG. At Ser331 the chain carries Phosphoserine. Positions 429–442 are enriched in polar residues; it reads ECPSQSPCETTETL.

As to quaternary structure, binds to TRAF2. Interacts with BMX. Interacts (activated form) with XPNPEP3.

The protein resides in the membrane. Functionally, receptor with high affinity for TNFSF2/TNF-alpha and approximately 5-fold lower affinity for homotrimeric TNFSF1/lymphotoxin-alpha. The TRAF1/TRAF2 complex recruits the apoptotic suppressors BIRC2 and BIRC3 to TNFRSF1B/TNFR2. The chain is Tumor necrosis factor receptor superfamily member 1B (Tnfrsf1b) from Mus musculus (Mouse).